Reading from the N-terminus, the 159-residue chain is Cyclic pyranopterin monophosphate synthase (159 aa).

Residues 75–77 and 113–114 each bind substrate; these read LCH and ME. The active site involves aspartate 128.

It belongs to the MoaC family. Homohexamer; trimer of dimers.

It catalyses the reaction (8S)-3',8-cyclo-7,8-dihydroguanosine 5'-triphosphate = cyclic pyranopterin phosphate + diphosphate. Its pathway is cofactor biosynthesis; molybdopterin biosynthesis. Its function is as follows. Catalyzes the conversion of (8S)-3',8-cyclo-7,8-dihydroguanosine 5'-triphosphate to cyclic pyranopterin monophosphate (cPMP). The protein is Cyclic pyranopterin monophosphate synthase of Photorhabdus laumondii subsp. laumondii (strain DSM 15139 / CIP 105565 / TT01) (Photorhabdus luminescens subsp. laumondii).